A 152-amino-acid polypeptide reads, in one-letter code: Pertussis toxin subunit 4 (152 aa).

The first 42 residues, 1 to 42 (MLRRFPTRTTAPGQGGARRSRVRALAWLLASGAMTHLSPALA), serve as a signal peptide directing secretion. 2 disulfide bridges follow: Cys-73/Cys-93 and Cys-145/Cys-151.

Pertussis toxin contains five different chains, S1-S5. They are organized into 2 functional subunits: A, composed of S1 (which is toxic) and B, containing S2, S3, S5, and two copies of S4 (B binds to the membrane receptors). Dimers of S2-S4 and S3-S4 are held together by S5.

The protein localises to the secreted. It is found in the host cell membrane. PTX oligomer B binds to receptors on the eukaryotic cell surface and facilitates the translocation of the toxic subunit across the cell membrane. The protein is Pertussis toxin subunit 4 (ptxD) of Bordetella parapertussis (strain 12822 / ATCC BAA-587 / NCTC 13253).